We begin with the raw amino-acid sequence, 357 residues long: 3'-hydroxy-N-methyl-(S)-coclaurine 4'-O-methyltransferase 2 (357 aa).

Position 226 (aspartate 226) interacts with S-adenosyl-L-methionine. The active-site Proton acceptor is the histidine 264.

Belongs to the class I-like SAM-binding methyltransferase superfamily. Cation-independent O-methyltransferase family. COMT subfamily. Homodimer. Expressed in roots, stems, leaves and flowers.

The enzyme catalyses (S)-3'-hydroxy-N-methylcoclaurine + S-adenosyl-L-methionine = (S)-reticuline + S-adenosyl-L-homocysteine + H(+). It participates in alkaloid biosynthesis; (S)-reticuline biosynthesis; (S)-reticuline from (S)-norcoclaurine: step 4/4. In terms of biological role, involved in the biosynthesis of benzylisoquinoline alkaloids. Catalyzes the transfer of the methyl group to the 4'-hydroxyl group of 3'-hydroxy-N-methylcoclaurine to form reticuline. Can also use laudanosoline and, with a lower activity, 6-O-methylnorlaudanosoline and norlaudanosoline as substrates. Also involved in the papaverine biosynthesis. The polypeptide is 3'-hydroxy-N-methyl-(S)-coclaurine 4'-O-methyltransferase 2 (Papaver somniferum (Opium poppy)).